The chain runs to 166 residues: Nucleotide-binding protein Dred_1927 (166 aa).

Belongs to the YajQ family.

Nucleotide-binding protein. This Desulforamulus reducens (strain ATCC BAA-1160 / DSM 100696 / MI-1) (Desulfotomaculum reducens) protein is Nucleotide-binding protein Dred_1927.